A 262-amino-acid chain; its full sequence is ATP synthase subunit a (262 aa).

7 helical membrane-spanning segments follow: residues 30–50 (ITSLTNIAILFIIGLLVLTIF), 64–84 (WNIVLETWVASILGIVKDQIG), 91–111 (LIYFPLIFTFFSFVFISNILG), 123–143 (ISVTLGLSIAIMIGVTLIGFS), 149–169 (FFSLFVPKGTPLALVPLLVLI), 195–215 (LFGVISMLSVSACMAVSSILL), and 220–240 (IGLPLAVLVVLYGLELLVALL).

Belongs to the ATPase A chain family. In terms of assembly, F-type ATPases have 2 components, CF(1) - the catalytic core - and CF(0) - the membrane proton channel. CF(1) has five subunits: alpha(3), beta(3), gamma(1), delta(1), epsilon(1). CF(0) has three main subunits: a, b and c.

It localises to the mitochondrion inner membrane. Its function is as follows. Mitochondrial membrane ATP synthase (F(1)F(0) ATP synthase or Complex V) produces ATP from ADP in the presence of a proton gradient across the membrane which is generated by electron transport complexes of the respiratory chain. F-type ATPases consist of two structural domains, F(1) - containing the extramembraneous catalytic core and F(0) - containing the membrane proton channel, linked together by a central stalk and a peripheral stalk. During catalysis, ATP synthesis in the catalytic domain of F(1) is coupled via a rotary mechanism of the central stalk subunits to proton translocation. Key component of the proton channel; it may play a direct role in the translocation of protons across the membrane. The chain is ATP synthase subunit a (ATP6) from Allomyces arbusculus (Aquatic fungus).